A 513-amino-acid polypeptide reads, in one-letter code: ATP synthase subunit alpha, mitochondrial (513 aa).

170–177 provides a ligand contact to ATP; that stretch reads GDRQTGKT.

This sequence belongs to the ATPase alpha/beta chains family. As to quaternary structure, F-type ATPases have 2 components, CF(1) - the catalytic core - and CF(0) - the membrane proton channel. CF(1) has five subunits: alpha(3), beta(3), gamma(1), delta(1), epsilon(1). CF(0) has three main subunits: a, b and c.

The protein localises to the mitochondrion. The protein resides in the mitochondrion inner membrane. Mitochondrial membrane ATP synthase (F(1)F(0) ATP synthase or Complex V) produces ATP from ADP in the presence of a proton gradient across the membrane which is generated by electron transport complexes of the respiratory chain. F-type ATPases consist of two structural domains, F(1) - containing the extramembraneous catalytic core, and F(0) - containing the membrane proton channel, linked together by a central stalk and a peripheral stalk. During catalysis, ATP synthesis in the catalytic domain of F(1) is coupled via a rotary mechanism of the central stalk subunits to proton translocation. Subunits alpha and beta form the catalytic core in F(1). Rotation of the central stalk against the surrounding alpha(3)beta(3) subunits leads to hydrolysis of ATP in three separate catalytic sites on the beta subunits. Subunit alpha does not bear the catalytic high-affinity ATP-binding sites. This is ATP synthase subunit alpha, mitochondrial (ATPA) from Marchantia polymorpha (Common liverwort).